A 323-amino-acid chain; its full sequence is UDP-N-acetylenolpyruvoylglucosamine reductase (323 aa).

An FAD-binding PCMH-type domain is found at 52-217 (KSGGAADWLF…VSARLQGEPG (166 aa)). Residue R197 is part of the active site. The segment at 234-253 (EQSQPVRTKTGGSTFKNPPG) is disordered. Polar residues predominate over residues 235-249 (QSQPVRTKTGGSTFK). S246 (proton donor) is an active-site residue. The active site involves E316.

It belongs to the MurB family. The cofactor is FAD.

The protein resides in the cytoplasm. The enzyme catalyses UDP-N-acetyl-alpha-D-muramate + NADP(+) = UDP-N-acetyl-3-O-(1-carboxyvinyl)-alpha-D-glucosamine + NADPH + H(+). It functions in the pathway cell wall biogenesis; peptidoglycan biosynthesis. Functionally, cell wall formation. This chain is UDP-N-acetylenolpyruvoylglucosamine reductase, found in Erythrobacter litoralis (strain HTCC2594).